Reading from the N-terminus, the 445-residue chain is UDP-N-acetylmuramoylalanine--D-glutamate ligase (445 aa).

Gly117 to Thr123 contributes to the ATP binding site.

The protein belongs to the MurCDEF family.

The protein resides in the cytoplasm. The enzyme catalyses UDP-N-acetyl-alpha-D-muramoyl-L-alanine + D-glutamate + ATP = UDP-N-acetyl-alpha-D-muramoyl-L-alanyl-D-glutamate + ADP + phosphate + H(+). It functions in the pathway cell wall biogenesis; peptidoglycan biosynthesis. Its function is as follows. Cell wall formation. Catalyzes the addition of glutamate to the nucleotide precursor UDP-N-acetylmuramoyl-L-alanine (UMA). The polypeptide is UDP-N-acetylmuramoylalanine--D-glutamate ligase (Neisseria meningitidis serogroup A / serotype 4A (strain DSM 15465 / Z2491)).